We begin with the raw amino-acid sequence, 77 residues long: Secapin (77 aa).

Positions 1 to 32 (MKNYSKNATYLITVLLFSFVAMLLIIPSKCEA) are cleaved as a signal peptide. A propeptide spanning residues 33–52 (VSNDMQPLEARSADLVPEPR) is cleaved from the precursor. Cysteine 61 and cysteine 72 form a disulfide bridge.

This sequence belongs to the secapin family. Expressed by the venom gland.

It localises to the secreted. Functionally, nontoxic peptide. This Vespa magnifica (Hornet) protein is Secapin.